Consider the following 689-residue polypeptide: Potassium-transporting ATPase ATP-binding subunit (689 aa).

A run of 4 helical transmembrane segments spans residues 35 to 55 (VMFV…AILA), 62 to 82 (AAFT…ANFA), 220 to 240 (ALTI…ATLF), and 260 to 280 (VLVA…LSAI). D313 functions as the 4-aspartylphosphate intermediate in the catalytic mechanism. Residues D350, E354, 383–390 (FSAQTRMS), and K401 contribute to the ATP site. Mg(2+)-binding residues include D524 and D528. 3 helical membrane passes run 594–614 (FAII…LNVM), 622–642 (AIMS…PLAL), and 665–685 (VGGL…LVAL).

It belongs to the cation transport ATPase (P-type) (TC 3.A.3) family. Type IA subfamily. As to quaternary structure, the system is composed of three essential subunits: KdpA, KdpB and KdpC.

The protein localises to the cell inner membrane. It catalyses the reaction K(+)(out) + ATP + H2O = K(+)(in) + ADP + phosphate + H(+). Functionally, part of the high-affinity ATP-driven potassium transport (or Kdp) system, which catalyzes the hydrolysis of ATP coupled with the electrogenic transport of potassium into the cytoplasm. This subunit is responsible for energy coupling to the transport system and for the release of the potassium ions to the cytoplasm. The sequence is that of Potassium-transporting ATPase ATP-binding subunit from Serratia proteamaculans (strain 568).